The primary structure comprises 698 residues: Probable threonine--tRNA ligase 2, cytoplasmic (698 aa).

The region spanning 38 to 100 is the TGS domain; it reads GGGNIKLNDG…EMSGKDYNIE (63 aa). Residues 541 to 560 form a disordered region; that stretch reads NNNNNNNNNNEEINDNNNNN.

It belongs to the class-II aminoacyl-tRNA synthetase family.

It is found in the cytoplasm. It catalyses the reaction tRNA(Thr) + L-threonine + ATP = L-threonyl-tRNA(Thr) + AMP + diphosphate + H(+). This chain is Probable threonine--tRNA ligase 2, cytoplasmic (thrS2), found in Dictyostelium discoideum (Social amoeba).